The primary structure comprises 379 residues: Cytochrome b (379 aa).

Transmembrane regions (helical) follow at residues 33 to 53, 77 to 98, 113 to 133, and 178 to 198; these read FGSL…FLAM, WLIR…FIHV, WNIG…GYVL, and FFAF…VHLL. Heme b is bound by residues histidine 83 and histidine 97. 2 residues coordinate heme b: histidine 182 and histidine 196. Histidine 201 is an a ubiquinone binding site. 4 helical membrane-spanning segments follow: residues 226-246, 288-308, 320-340, and 347-367; these read IKDL…ALFF, LGGV…PLLN, VTQT…WIGG, and FTMI…ILIP.

This sequence belongs to the cytochrome b family. The cytochrome bc1 complex contains 11 subunits: 3 respiratory subunits (MT-CYB, CYC1 and UQCRFS1), 2 core proteins (UQCRC1 and UQCRC2) and 6 low-molecular weight proteins (UQCRH/QCR6, UQCRB/QCR7, UQCRQ/QCR8, UQCR10/QCR9, UQCR11/QCR10 and a cleavage product of UQCRFS1). This cytochrome bc1 complex then forms a dimer. It depends on heme b as a cofactor.

It is found in the mitochondrion inner membrane. Its function is as follows. Component of the ubiquinol-cytochrome c reductase complex (complex III or cytochrome b-c1 complex) that is part of the mitochondrial respiratory chain. The b-c1 complex mediates electron transfer from ubiquinol to cytochrome c. Contributes to the generation of a proton gradient across the mitochondrial membrane that is then used for ATP synthesis. The sequence is that of Cytochrome b (MT-CYB) from Akodon philipmyersi (Myers' grass mouse).